Here is a 384-residue protein sequence, read N- to C-terminus: D-galactosamine-6-phosphate deaminase AgaS (384 aa).

2 consecutive SIS domains span residues 45 to 197 and 215 to 364; these read LEPL…SQTF and SEGV…PDTP.

This sequence belongs to the SIS family. AgaS subfamily.

It carries out the reaction D-galactosamine 6-phosphate + H2O = D-tagatopyranose 1-phosphate + NH4(+). In terms of biological role, catalyzes the isomerization-deamination of galactosamine 6-phosphate to form tagatofuranose 6-phosphate and ammonium ion. In Escherichia coli O157:H7, this protein is D-galactosamine-6-phosphate deaminase AgaS.